A 164-amino-acid chain; its full sequence is FMN reductase (NADH) RutF (164 aa).

It belongs to the non-flavoprotein flavin reductase family. RutF subfamily.

The enzyme catalyses FMNH2 + NAD(+) = FMN + NADH + 2 H(+). Functionally, catalyzes the reduction of FMN to FMNH2 which is used to reduce pyrimidine by RutA via the Rut pathway. This chain is FMN reductase (NADH) RutF, found in Escherichia coli O45:K1 (strain S88 / ExPEC).